A 60-amino-acid chain; its full sequence is uncharacterized protein (60 aa).

This is an uncharacterized protein from Thermotoga maritima (strain ATCC 43589 / DSM 3109 / JCM 10099 / NBRC 100826 / MSB8).